The sequence spans 153 residues: Endoribonuclease YbeY (153 aa).

Positions 118, 122, and 128 each coordinate Zn(2+).

Belongs to the endoribonuclease YbeY family. Zn(2+) serves as cofactor.

The protein localises to the cytoplasm. Its function is as follows. Single strand-specific metallo-endoribonuclease involved in late-stage 70S ribosome quality control and in maturation of the 3' terminus of the 16S rRNA. This chain is Endoribonuclease YbeY, found in Oenococcus oeni (strain ATCC BAA-331 / PSU-1).